The primary structure comprises 340 residues: Ketol-acid reductoisomerase (NADP(+)) (340 aa).

The 182-residue stretch at 1-182 folds into the KARI N-terminal Rossmann domain; it reads MRVYYDRDCD…GGGRSGIIET (182 aa). Residues 24–27, R48, S51, S53, and 83–86 contribute to the NADP(+) site; these read YGSQ and DELQ. H108 is an active-site residue. G134 serves as a coordination point for NADP(+). In terms of domain architecture, KARI C-terminal knotted spans 183–329; that stretch reads NFRQECETDL…EKLRGMMPWI (147 aa). The Mg(2+) site is built by D191, E195, E227, and E231. S252 serves as a coordination point for substrate.

The protein belongs to the ketol-acid reductoisomerase family. Mg(2+) serves as cofactor.

The enzyme catalyses (2R)-2,3-dihydroxy-3-methylbutanoate + NADP(+) = (2S)-2-acetolactate + NADPH + H(+). It carries out the reaction (2R,3R)-2,3-dihydroxy-3-methylpentanoate + NADP(+) = (S)-2-ethyl-2-hydroxy-3-oxobutanoate + NADPH + H(+). Its pathway is amino-acid biosynthesis; L-isoleucine biosynthesis; L-isoleucine from 2-oxobutanoate: step 2/4. It functions in the pathway amino-acid biosynthesis; L-valine biosynthesis; L-valine from pyruvate: step 2/4. In terms of biological role, involved in the biosynthesis of branched-chain amino acids (BCAA). Catalyzes an alkyl-migration followed by a ketol-acid reduction of (S)-2-acetolactate (S2AL) to yield (R)-2,3-dihydroxy-isovalerate. In the isomerase reaction, S2AL is rearranged via a Mg-dependent methyl migration to produce 3-hydroxy-3-methyl-2-ketobutyrate (HMKB). In the reductase reaction, this 2-ketoacid undergoes a metal-dependent reduction by NADPH to yield (R)-2,3-dihydroxy-isovalerate. The chain is Ketol-acid reductoisomerase (NADP(+)) from Cereibacter sphaeroides (strain ATCC 17023 / DSM 158 / JCM 6121 / CCUG 31486 / LMG 2827 / NBRC 12203 / NCIMB 8253 / ATH 2.4.1.) (Rhodobacter sphaeroides).